Reading from the N-terminus, the 191-residue chain is Thioredoxin F-type, chloroplastic (191 aa).

The region spanning 68–190 is the Thioredoxin domain; that stretch reads KASLETAVGA…LVAAIEAARS (123 aa). Residues Cys115 and Cys118 each act as nucleophile in the active site. Cysteines 115 and 118 form a disulfide.

It belongs to the thioredoxin family. Plant F-type subfamily. In terms of assembly, forms a complex with heterodimeric ferredoxin-thioredoxin reductase (FTR) and ferredoxin.

It localises to the plastid. The protein resides in the chloroplast. In terms of biological role, participates in various redox reactions through the reversible oxidation of the active center dithiol to a disulfide. The F form is known to activate a number of enzymes of the photosynthetic carbon cycle. This chain is Thioredoxin F-type, chloroplastic, found in Mesembryanthemum crystallinum (Common ice plant).